Here is a 237-residue protein sequence, read N- to C-terminus: Riboflavin kinase (237 aa).

Positions 1–23 (MSLPNPDNRPLLIGPPTGPEAPF) are disordered. Mg(2+) contacts are provided by threonine 46 and asparagine 48. Positions 82-126 (VLYQKPPTSEPVMMDPVQQQQQQQQQQRNQQQQQEGGVGSAQQEK) are disordered. A compositionally biased stretch (low complexity) spans 99-115 (QQQQQQQQQQRNQQQQQ). Glutamate 158 serves as the catalytic Nucleophile.

The protein belongs to the flavokinase family. Zn(2+) serves as cofactor. Mg(2+) is required as a cofactor.

It carries out the reaction riboflavin + ATP = FMN + ADP + H(+). The protein operates within cofactor biosynthesis; FMN biosynthesis; FMN from riboflavin (ATP route): step 1/1. Its function is as follows. Catalyzes the phosphorylation of riboflavin (vitamin B2) to form flavin mononucleotide (FMN) coenzyme. The chain is Riboflavin kinase (fmn1) from Neurospora crassa (strain ATCC 24698 / 74-OR23-1A / CBS 708.71 / DSM 1257 / FGSC 987).